We begin with the raw amino-acid sequence, 119 residues long: Ribonuclease P protein component (119 aa).

The protein belongs to the RnpA family. Consists of a catalytic RNA component (M1 or rnpB) and a protein subunit.

The enzyme catalyses Endonucleolytic cleavage of RNA, removing 5'-extranucleotides from tRNA precursor.. Functionally, RNaseP catalyzes the removal of the 5'-leader sequence from pre-tRNA to produce the mature 5'-terminus. It can also cleave other RNA substrates such as 4.5S RNA. The protein component plays an auxiliary but essential role in vivo by binding to the 5'-leader sequence and broadening the substrate specificity of the ribozyme. This chain is Ribonuclease P protein component, found in Listeria innocua serovar 6a (strain ATCC BAA-680 / CLIP 11262).